We begin with the raw amino-acid sequence, 420 residues long: Gamma-glutamyl phosphate reductase (420 aa).

Belongs to the gamma-glutamyl phosphate reductase family.

It localises to the cytoplasm. The enzyme catalyses L-glutamate 5-semialdehyde + phosphate + NADP(+) = L-glutamyl 5-phosphate + NADPH + H(+). The protein operates within amino-acid biosynthesis; L-proline biosynthesis; L-glutamate 5-semialdehyde from L-glutamate: step 2/2. Functionally, catalyzes the NADPH-dependent reduction of L-glutamate 5-phosphate into L-glutamate 5-semialdehyde and phosphate. The product spontaneously undergoes cyclization to form 1-pyrroline-5-carboxylate. This is Gamma-glutamyl phosphate reductase from Streptococcus pneumoniae (strain Hungary19A-6).